The following is a 328-amino-acid chain: G2/mitotic-specific cyclin-2 (328 aa).

Belongs to the cyclin family. Cyclin AB subfamily. Interacts with the CDC2 protein kinase to form a serine/threonine kinase holoenzyme complex also known as maturation promoting factor (MPF). The cyclin subunit imparts substrate specificity to the complex. Only expressed in organs with dividing cells.

Essential for the control of the cell cycle at the G2/M (mitosis) transition. The polypeptide is G2/mitotic-specific cyclin-2 (Medicago sativa (Alfalfa)).